A 535-amino-acid chain; its full sequence is Potassium channel subfamily K member 10 (535 aa).

Over 1–68 (MYFSYIGYFF…GLQTVMKWKT (68 aa)) the chain is Cytoplasmic. A helical membrane pass occupies residues 69–89 (VVAIFVVVVVYLVTGGLVFRA). The segment at residues 151-177 (LGSAFFFAGTVITTIGYGNIAPSTEGG) is an intramembrane region (pore-forming). The K(+) site is built by Thr-164, Ile-165, Gly-166, and Tyr-167. The segment at 164 to 169 (TIGYGN) is selectivity filter 1. The chain crosses the membrane as a helical span at residues 179–199 (IFCILYAIFGIPLFGFLLAGI). The Cytoplasmic segment spans residues 200 to 230 (GDQLGTIFGKSIARVEKVFRKKQVSQTKIRV). Residues 231-251 (ISTILFILAGCIVFVTIPAVI) traverse the membrane as a helical segment. Residues 260–291 (ALESIYFVVVTLTTVGFGDFVAGGNAGINYRE) constitute an intramembrane region (pore-forming). Residues Thr-273, Val-274, Gly-275, and Phe-276 each coordinate K(+). Positions 273 to 278 (TVGFGD) are selectivity filter 2. Residues 296 to 316 (LVWFWILVGLAYFAAVLSMIG) form a helical membrane-spanning segment. At 317–535 (DWLRVLSKKT…ENNSLLEDRN (219 aa)) the chain is on the cytoplasmic side. Disordered regions lie at residues 410 to 438 (QESINNRPNNLRLKGPEQLTKHGQGASED) and 510 to 535 (EMENGMVPTDTKDQGLENNSLLEDRN). Over residues 525–535 (LENNSLLEDRN) the composition is skewed to polar residues.

In terms of assembly, homodimer; disulfide-linked. Forms heterodimers with other 2-pore domain K(+) channel subunits, such as KCNK2, KCNK4 and KCNK18. Detected in dorsal root ganglia (DRG) neurons (at protein level).

It localises to the cell membrane. The enzyme catalyses K(+)(in) = K(+)(out). It carries out the reaction Rb(+)(in) = Rb(+)(out). The catalysed reaction is Cs(+)(in) = Cs(+)(out). Activated by stimuli such as mechanical stretch, acidic pH and polyunsaturated free fatty acids. Activated by a dihydroacridine analog, ML67-33. Inhibited by polycationic dye ruthenium red. Selectively activated by T2A3 (2-[(4-chloro-3-methylphenyl)amino] benzoic acid). Its function is as follows. K(+) channel that conducts voltage-dependent outward rectifying currents upon membrane depolarization. Voltage sensing is coupled to K(+) electrochemical gradient in an 'ion flux gating' mode where outward but not inward ion flow opens the gate. Converts to voltage-independent 'leak' conductance mode upon stimulation by various stimuli including mechanical membrane stretch, acidic pH, heat and lipids. Homo- and heterodimerizes to form functional channels with distinct regulatory and gating properties. In trigeminal ganglia sensory neurons, the heterodimer of KCNK10/TREK-2 and KCNK18/TRESK inhibits neuronal firing and neurogenic inflammation by stabilizing the resting membrane potential at K(+) equilibrium potential as well as by regulating the threshold of action potentials and the spike frequency. Permeable to other monovalent ions such as Rb(+) and Cs(+). This chain is Potassium channel subfamily K member 10, found in Mus musculus (Mouse).